The primary structure comprises 396 residues: Ornithine aminotransferase (396 aa).

Lys255 is modified (N6-(pyridoxal phosphate)lysine).

Belongs to the class-III pyridoxal-phosphate-dependent aminotransferase family. OAT subfamily. Pyridoxal 5'-phosphate serves as cofactor.

The protein resides in the cytoplasm. It catalyses the reaction a 2-oxocarboxylate + L-ornithine = L-glutamate 5-semialdehyde + an L-alpha-amino acid. Its pathway is amino-acid biosynthesis; L-proline biosynthesis; L-glutamate 5-semialdehyde from L-ornithine: step 1/1. Functionally, catalyzes the interconversion of ornithine to glutamate semialdehyde. This Staphylococcus carnosus (strain TM300) protein is Ornithine aminotransferase.